Here is a 284-residue protein sequence, read N- to C-terminus: Bifunctional protein FolD 2 (284 aa).

NADP(+)-binding positions include glycine 166–serine 168 and isoleucine 232.

The protein belongs to the tetrahydrofolate dehydrogenase/cyclohydrolase family. As to quaternary structure, homodimer.

The catalysed reaction is (6R)-5,10-methylene-5,6,7,8-tetrahydrofolate + NADP(+) = (6R)-5,10-methenyltetrahydrofolate + NADPH. It catalyses the reaction (6R)-5,10-methenyltetrahydrofolate + H2O = (6R)-10-formyltetrahydrofolate + H(+). It functions in the pathway one-carbon metabolism; tetrahydrofolate interconversion. In terms of biological role, catalyzes the oxidation of 5,10-methylenetetrahydrofolate to 5,10-methenyltetrahydrofolate and then the hydrolysis of 5,10-methenyltetrahydrofolate to 10-formyltetrahydrofolate. This chain is Bifunctional protein FolD 2, found in Colwellia psychrerythraea (strain 34H / ATCC BAA-681) (Vibrio psychroerythus).